Reading from the N-terminus, the 448-residue chain is Glucose-6-phosphate isomerase (448 aa).

Glu-288 serves as the catalytic Proton donor. Residues His-309 and Lys-423 contribute to the active site.

This sequence belongs to the GPI family.

It is found in the cytoplasm. It catalyses the reaction alpha-D-glucose 6-phosphate = beta-D-fructose 6-phosphate. Its pathway is carbohydrate biosynthesis; gluconeogenesis. The protein operates within carbohydrate degradation; glycolysis; D-glyceraldehyde 3-phosphate and glycerone phosphate from D-glucose: step 2/4. Functionally, catalyzes the reversible isomerization of glucose-6-phosphate to fructose-6-phosphate. This chain is Glucose-6-phosphate isomerase, found in Fusobacterium nucleatum subsp. nucleatum (strain ATCC 25586 / DSM 15643 / BCRC 10681 / CIP 101130 / JCM 8532 / KCTC 2640 / LMG 13131 / VPI 4355).